The primary structure comprises 362 residues: Phospho-N-acetylmuramoyl-pentapeptide-transferase (362 aa).

Helical transmembrane passes span 21-41 (YITF…FLLG), 75-95 (TMGG…WADL), 100-120 (VWAV…DDFL), 136-156 (LVVQ…LMPG), 170-190 (LMIP…MGAS), 201-221 (GLAI…AYLV), 225-245 (IFSH…AVFC), 247-267 (ALIG…AVFM), 290-310 (IVLA…IVQV), and 339-359 (TVVI…LATL).

It belongs to the glycosyltransferase 4 family. MraY subfamily. Mg(2+) serves as cofactor.

Its subcellular location is the cell inner membrane. It catalyses the reaction UDP-N-acetyl-alpha-D-muramoyl-L-alanyl-gamma-D-glutamyl-meso-2,6-diaminopimeloyl-D-alanyl-D-alanine + di-trans,octa-cis-undecaprenyl phosphate = di-trans,octa-cis-undecaprenyl diphospho-N-acetyl-alpha-D-muramoyl-L-alanyl-D-glutamyl-meso-2,6-diaminopimeloyl-D-alanyl-D-alanine + UMP. It participates in cell wall biogenesis; peptidoglycan biosynthesis. Its function is as follows. Catalyzes the initial step of the lipid cycle reactions in the biosynthesis of the cell wall peptidoglycan: transfers peptidoglycan precursor phospho-MurNAc-pentapeptide from UDP-MurNAc-pentapeptide onto the lipid carrier undecaprenyl phosphate, yielding undecaprenyl-pyrophosphoryl-MurNAc-pentapeptide, known as lipid I. In Acidiphilium cryptum (strain JF-5), this protein is Phospho-N-acetylmuramoyl-pentapeptide-transferase.